The following is a 1332-amino-acid chain: DNA-directed RNA polymerase subunit beta'' (1332 aa).

Cysteine 220, cysteine 291, cysteine 298, and cysteine 301 together coordinate Zn(2+).

This sequence belongs to the RNA polymerase beta' chain family. RpoC2 subfamily. As to quaternary structure, in plastids the minimal PEP RNA polymerase catalytic core is composed of four subunits: alpha, beta, beta', and beta''. When a (nuclear-encoded) sigma factor is associated with the core the holoenzyme is formed, which can initiate transcription. The cofactor is Zn(2+).

The protein resides in the plastid. It is found in the chloroplast. The enzyme catalyses RNA(n) + a ribonucleoside 5'-triphosphate = RNA(n+1) + diphosphate. DNA-dependent RNA polymerase catalyzes the transcription of DNA into RNA using the four ribonucleoside triphosphates as substrates. The chain is DNA-directed RNA polymerase subunit beta'' from Lotus japonicus (Lotus corniculatus var. japonicus).